Here is a 174-residue protein sequence, read N- to C-terminus: Protein MOTHER of FT and TFL1 homolog 2 (174 aa).

It belongs to the phosphatidylethanolamine-binding protein family.

May form complexes with phosphorylated ligands by interfering with kinases and their effectors. The chain is Protein MOTHER of FT and TFL1 homolog 2 from Oryza sativa subsp. japonica (Rice).